The following is a 258-amino-acid chain: 5-oxoprolinase subunit A (258 aa).

Belongs to the LamB/PxpA family. Forms a complex composed of PxpA, PxpB and PxpC.

The enzyme catalyses 5-oxo-L-proline + ATP + 2 H2O = L-glutamate + ADP + phosphate + H(+). Its function is as follows. Catalyzes the cleavage of 5-oxoproline to form L-glutamate coupled to the hydrolysis of ATP to ADP and inorganic phosphate. The polypeptide is 5-oxoprolinase subunit A (Deinococcus radiodurans (strain ATCC 13939 / DSM 20539 / JCM 16871 / CCUG 27074 / LMG 4051 / NBRC 15346 / NCIMB 9279 / VKM B-1422 / R1)).